Here is a 912-residue protein sequence, read N- to C-terminus: Vomeronasal type-2 receptor 1 (912 aa).

Positions 1-21 are cleaved as a signal peptide; sequence MASRQISLALGFLAFLWAVLG. Topologically, residues 22-623 are extracellular; that stretch reads AQNKTEEVQC…LAYGEALGFT (602 aa). Residues asparagine 24, asparagine 38, asparagine 299, and asparagine 386 are each glycosylated (N-linked (GlcNAc...) asparagine). The helical transmembrane segment at 624 to 644 threads the bilayer; that stretch reads LVILSIFGALVVLAVTVVYVI. Residues 645 to 657 are Cytoplasmic-facing; sequence HRHTPLVKANDRE. Residues 658-678 form a helical membrane-spanning segment; sequence LSFLIQMSLVITVLSSLLFIG. The Extracellular segment spans residues 679–691; the sequence is KPCNWSCMARQIT. Residues 692–712 traverse the membrane as a helical segment; the sequence is LALGFCLCLSSILGKTISLFF. Residues 713–732 lie on the Cytoplasmic side of the membrane; sequence AYRISVSKTRLISMHPIFRK. Residues 733–753 form a helical membrane-spanning segment; it reads LIVLVCVVGEIGVCAAYLVLE. Over 754-778 the chain is Extracellular; the sequence is PPRMFKNIEIQNVKIIFECNEGSVE. Residues 779–799 traverse the membrane as a helical segment; that stretch reads FLCSIFGFDVLRALLCFLTTF. Residues 800 to 812 are Cytoplasmic-facing; that stretch reads VARQLPDNYYEGK. Residues 813-833 traverse the membrane as a helical segment; it reads CITFGMLVFFIVWISFVPAYL. At 834–840 the chain is on the extracellular side; it reads STKGKFK. The chain crosses the membrane as a helical span at residues 841-861; that stretch reads VAVEIFAILASSYGLLGCLFL. Over 862–912 the chain is Cytoplasmic; sequence PKCFIILLRPKRNTDETVGGRVPTVDRSIQLTSASVSSELNSTTVSTVLDE.

It belongs to the G-protein coupled receptor 3 family. As to expression, expressed at the sensory surface of the vomeronasal organ.

It is found in the cell membrane. Functionally, putative pheromone receptor. The sequence is that of Vomeronasal type-2 receptor 1 (Vmn2r1) from Mus musculus (Mouse).